An 86-amino-acid polypeptide reads, in one-letter code: 4-hydroxyphenylacetate decarboxylase small subunit (86 aa).

[4Fe-4S] cluster-binding residues include His3, Cys6, Cys19, Cys36, Cys45, Cys48, Cys62, and Cys80.

Belongs to the HPA decarboxylase small subunit family. In terms of assembly, heterooctamer consisting of 4 large (HpdB) subunits and 4 small (HpdC) subunits, arranged as a tetramer of heterodimers. It depends on [4Fe-4S] cluster as a cofactor.

The catalysed reaction is 4-hydroxyphenylacetate + H(+) = 4-methylphenol + CO2. The enzyme catalyses 3,4-dihydroxyphenylacetate + H(+) = 4-methylcatechol + CO2. Its function is as follows. Component of the HPA decarboxylase that decarboxylates phenylacetates with a hydroxyl group in the p-position. Active toward 4-hydroxyphenylacetate and 3,4-dihydroxyphenylacetate, forming 4-methylphenol and 4-methylcatechol, respectively. Is likely involved in the catabolism of aromatic amino acids such as tyrosine fermentation. 4-methylphenol (p-cresol) formation provides metabolic toxicity, which allows an active suppression of other microbes and may provide growth advantages for the producers in highly competitive environments. The small subunit is essential for enzymatic activity of HPA decarboxylase, and also seems to be involved in the regulation of the enzyme oligomeric state and catalytic activity. This chain is 4-hydroxyphenylacetate decarboxylase small subunit, found in Clostridium scatologenes.